A 363-amino-acid chain; its full sequence is Ribosomal RNA large subunit methyltransferase M (363 aa).

S-adenosyl-L-methionine-binding positions include Ser194, Cys227–Gly230, Asp246, Asp266, and Asp284. The active-site Proton acceptor is the Lys313.

Belongs to the class I-like SAM-binding methyltransferase superfamily. RNA methyltransferase RlmE family. RlmM subfamily. As to quaternary structure, monomer.

The protein localises to the cytoplasm. It catalyses the reaction cytidine(2498) in 23S rRNA + S-adenosyl-L-methionine = 2'-O-methylcytidine(2498) in 23S rRNA + S-adenosyl-L-homocysteine + H(+). Its function is as follows. Catalyzes the 2'-O-methylation at nucleotide C2498 in 23S rRNA. This Haemophilus influenzae (strain ATCC 51907 / DSM 11121 / KW20 / Rd) protein is Ribosomal RNA large subunit methyltransferase M.